The following is a 318-amino-acid chain: Probable cell division protein WhiA (318 aa).

The H-T-H motif DNA-binding region spans 276–310; it reads TLQELGEMVESGSISKSGINHRLRKIDQIADKIRN.

The protein belongs to the WhiA family.

Functionally, involved in cell division and chromosome segregation. This Exiguobacterium sibiricum (strain DSM 17290 / CCUG 55495 / CIP 109462 / JCM 13490 / 255-15) protein is Probable cell division protein WhiA.